The primary structure comprises 292 residues: Acetylglutamate kinase (292 aa).

Substrate-binding positions include 64–65 (GG), arginine 86, and asparagine 190.

It belongs to the acetylglutamate kinase family. ArgB subfamily.

It is found in the cytoplasm. The enzyme catalyses N-acetyl-L-glutamate + ATP = N-acetyl-L-glutamyl 5-phosphate + ADP. The protein operates within amino-acid biosynthesis; L-arginine biosynthesis; N(2)-acetyl-L-ornithine from L-glutamate: step 2/4. Functionally, catalyzes the ATP-dependent phosphorylation of N-acetyl-L-glutamate. This is Acetylglutamate kinase from Geotalea uraniireducens (strain Rf4) (Geobacter uraniireducens).